We begin with the raw amino-acid sequence, 486 residues long: uncharacterized protein (486 aa).

Residues 18 to 38 (TLLQLFVFTVICVFVLSGLAI) form a helical membrane-spanning segment. Positions 62–79 (DRQKQMEKQQDSGEKRSF) are enriched in basic and acidic residues. Disordered stretches follow at residues 62-82 (DRQKQMEKQQDSGEKRSFEST) and 117-147 (IESSSSSDSSSSSSSSNAKNSQGGGQGGPQM). The span at 119–132 (SSSSSDSSSSSSSS) shows a compositional bias: low complexity. 3 helical membrane-spanning segments follow: residues 324 to 344 (VVYLVSVAGAVILGLIVMMSI), 365 to 385 (IGQFLTEILIVAVIAIGLASV), and 451 to 471 (MLILGGIGILIAIIATLLPSI).

This sequence belongs to the ABC-4 integral membrane protein family.

The protein resides in the cell membrane. This is an uncharacterized protein from Bacillus subtilis (strain 168).